We begin with the raw amino-acid sequence, 286 residues long: Shikimate dehydrogenase (NADP(+)) (286 aa).

Shikimate is bound by residues 19 to 21 (SVS) and Thr-66. Lys-70 functions as the Proton acceptor in the catalytic mechanism. Shikimate-binding residues include Asn-91 and Asp-106. Residues 130–134 (GAGGS) and Ala-225 contribute to the NADP(+) site. Shikimate is bound at residue Tyr-227. Residue Gly-248 participates in NADP(+) binding.

Belongs to the shikimate dehydrogenase family. Homodimer.

The catalysed reaction is shikimate + NADP(+) = 3-dehydroshikimate + NADPH + H(+). It participates in metabolic intermediate biosynthesis; chorismate biosynthesis; chorismate from D-erythrose 4-phosphate and phosphoenolpyruvate: step 4/7. Involved in the biosynthesis of the chorismate, which leads to the biosynthesis of aromatic amino acids. Catalyzes the reversible NADPH linked reduction of 3-dehydroshikimate (DHSA) to yield shikimate (SA). The sequence is that of Shikimate dehydrogenase (NADP(+)) from Dehalococcoides mccartyi (strain CBDB1).